The sequence spans 235 residues: Putative N-acetylmannosamine-6-phosphate 2-epimerase (235 aa).

The protein belongs to the NanE family.

It carries out the reaction an N-acyl-D-glucosamine 6-phosphate = an N-acyl-D-mannosamine 6-phosphate. The protein operates within amino-sugar metabolism; N-acetylneuraminate degradation; D-fructose 6-phosphate from N-acetylneuraminate: step 3/5. In terms of biological role, converts N-acetylmannosamine-6-phosphate (ManNAc-6-P) to N-acetylglucosamine-6-phosphate (GlcNAc-6-P). The chain is Putative N-acetylmannosamine-6-phosphate 2-epimerase from Photobacterium profundum (strain SS9).